The primary structure comprises 615 residues: MPIQVLPPQLANQIAAGEVVERPASVVKELVENSLDAGATRIDIDIERGGAKLIRIRDNGCGIKKDELALALARHATSKIASLDDLEAIISLGFRGEALASISSVSRLTLTSRTAEQQEAWQAYAEGRDMDVTVKPAAHPVGTTLEVLDLFYNTPARRKFLRTEKTEFNHIDEIIRRIALARFDVTINLSHNGKIVRQYRAVPEGGQKERRLGAICGTAFLEQALAIEWQHGDLTLRGWVADPNHTTPALAEIQYCYVNGRMMRDRLINHAIRQACEDKLGADQQPAFVLYLEIDPHQVDVNVHPAKHEVRFHQSRLVHDFIYQGVLSVLQQQLETPLPLDDEPQPAPRAIPENRVAAGRNHFAEPAVREPVAPRYSPAPASGSRPAASWPNAQPGYQKQQGEVYRQLLQTPAPMQKPKAPEPQEPALAANSQSFGRVLTIVHSDCALLERDGNISLLSLPVAERWLRQAQLTPGEVPVCAQPLLIPLRLKVSGEEKSALEKAQSALAELGIDFQSDAQHVTIRAVPLPLRQQNLQILIPELIGYLAKQSVFEPGNIAQWIARNLMSEHAQWSMAQAITLLADVERLCPQLVKTPPGGLLQSVDLHPAIKALKDE.

Residues 362–397 are disordered; it reads HFAEPAVREPVAPRYSPAPASGSRPAASWPNAQPGY. A compositionally biased stretch (low complexity) spans 373–391; that stretch reads APRYSPAPASGSRPAASWP.

It belongs to the DNA mismatch repair MutL/HexB family.

Functionally, this protein is involved in the repair of mismatches in DNA. It is required for dam-dependent methyl-directed DNA mismatch repair. May act as a 'molecular matchmaker', a protein that promotes the formation of a stable complex between two or more DNA-binding proteins in an ATP-dependent manner without itself being part of a final effector complex. The chain is DNA mismatch repair protein MutL from Escherichia coli O6:H1 (strain CFT073 / ATCC 700928 / UPEC).